The following is a 552-amino-acid chain: Non-structural protein NS1 (552 aa).

This sequence belongs to the orbivirus non-structural protein NS1 family.

This chain is Non-structural protein NS1 (Segment-5), found in Bluetongue virus 10 (isolate USA) (BTV 10).